A 52-amino-acid chain; its full sequence is Ribosome biogenesis protein Nop10 (52 aa).

Belongs to the NOP10 family.

Involved in ribosome biogenesis; more specifically in 18S rRNA pseudouridylation and in cleavage of pre-rRNA. The chain is Ribosome biogenesis protein Nop10 from Methanococcus vannielii (strain ATCC 35089 / DSM 1224 / JCM 13029 / OCM 148 / SB).